Consider the following 117-residue polypeptide: Large ribosomal subunit protein bL17 (117 aa).

The protein belongs to the bacterial ribosomal protein bL17 family. As to quaternary structure, part of the 50S ribosomal subunit. Contacts protein L32.

The polypeptide is Large ribosomal subunit protein bL17 (Endomicrobium trichonymphae).